The primary structure comprises 299 residues: Acetylglutamate kinase (299 aa).

Residues G66–G67, R88, and N196 each bind substrate.

Belongs to the acetylglutamate kinase family. ArgB subfamily.

Its subcellular location is the cytoplasm. It carries out the reaction N-acetyl-L-glutamate + ATP = N-acetyl-L-glutamyl 5-phosphate + ADP. The protein operates within amino-acid biosynthesis; L-arginine biosynthesis; N(2)-acetyl-L-ornithine from L-glutamate: step 2/4. In terms of biological role, catalyzes the ATP-dependent phosphorylation of N-acetyl-L-glutamate. This chain is Acetylglutamate kinase, found in Alcanivorax borkumensis (strain ATCC 700651 / DSM 11573 / NCIMB 13689 / SK2).